The sequence spans 304 residues: bZIP transcription factor 50 (304 aa).

Topologically, residues 1-222 are cytoplasmic; it reads MDVEFFADLD…MQESAVLTET (222 aa). Disordered regions lie at residues 26–60 and 94–163; these read GSGVSGLFAPSPPHDAEAGSPESVSSRRPSPSREA and GEEE…ERKK. The segment covering 45 to 59 has biased composition (low complexity); that stretch reads SPESVSSRRPSPSRE. Positions 127 to 139 are enriched in acidic residues; it reads EKEDVEAEVDGDD. One can recognise a bZIP domain in the interval 141-203; that stretch reads MSKKKRRQMR…NMALRQSLLK (63 aa). The tract at residues 143–167 is basic motif; it reads KKKRRQMRNRDSAMKSRERKKMYVK. Residues 150–163 are compositionally biased toward basic and acidic residues; it reads RNRDSAMKSRERKK. The leucine-zipper stretch occupies residues 169–183; sequence LETKSKYLEAECRRL. A helical transmembrane segment spans residues 223–243; that stretch reads LPLVSLLWLVSIVCLLPVPGL. Topologically, residues 244-304 are lumenal; sequence PNRNPVARSS…GPFRLAAAAC (61 aa).

Belongs to the bZIP family.

The protein localises to the endoplasmic reticulum membrane. Its subcellular location is the nucleus. Its activity is regulated as follows. Transcriptionally activated by IRE1 in response to endoplasmic reticulum (ER) stress. IRE1 cleaves a 20-bp fragment causing a frameshift of the mRNA transcript, leading to a nuclear isoform of the BZIP50 activator. In terms of biological role, transcription factor involved in endoplasmic reticulum (ER) stress response. Acts downstream of the ER stress sensors IRE1, BZIP39 and BZIP60 to activate BiP chaperone genes. This is bZIP transcription factor 50 from Oryza sativa subsp. japonica (Rice).